The chain runs to 299 residues: Hemolysin C homolog (299 aa).

CBS domains follow at residues 80–142 and 145–202; these read MVPR…NGRL and LIRK…IDDE.

Belongs to the UPF0053 family. Hemolysin C subfamily.

The polypeptide is Hemolysin C homolog (tlyC) (Rickettsia rickettsii (strain Sheila Smith)).